A 349-amino-acid polypeptide reads, in one-letter code: Protein-glutamate methylesterase/protein-glutamine glutaminase (349 aa).

A Response regulatory domain is found at 5-122 (KVLVVDDSAF…SLDLYKVKDE (118 aa)). The residue at position 56 (Asp56) is a 4-aspartylphosphate. Residues 156–349 (ARPQQAIVAI…AAAIVQLIGE (194 aa)) enclose the CheB-type methylesterase domain. Active-site residues include Ser168, His195, and Asp291.

Belongs to the CheB family. In terms of processing, phosphorylated by CheA. Phosphorylation of the N-terminal regulatory domain activates the methylesterase activity.

It is found in the cytoplasm. It catalyses the reaction [protein]-L-glutamate 5-O-methyl ester + H2O = L-glutamyl-[protein] + methanol + H(+). The enzyme catalyses L-glutaminyl-[protein] + H2O = L-glutamyl-[protein] + NH4(+). Functionally, involved in chemotaxis. Part of a chemotaxis signal transduction system that modulates chemotaxis in response to various stimuli. Catalyzes the demethylation of specific methylglutamate residues introduced into the chemoreceptors (methyl-accepting chemotaxis proteins or MCP) by CheR. Also mediates the irreversible deamidation of specific glutamine residues to glutamic acid. In Geobacillus kaustophilus (strain HTA426), this protein is Protein-glutamate methylesterase/protein-glutamine glutaminase.